The following is a 265-amino-acid chain: Mlc titration factor A (265 aa).

Zn(2+) contacts are provided by H111, H148, H152, and E211.

This sequence belongs to the MtfA family. In terms of assembly, interacts with Mlc. Zn(2+) is required as a cofactor.

It is found in the cytoplasm. In terms of biological role, involved in the modulation of the activity of the glucose-phosphotransferase system (glucose-PTS). Interacts with the transcriptional repressor Mlc, preventing its interaction with DNA and leading to the modulation of expression of genes regulated by Mlc, including ptsG, which encodes the PTS system glucose-specific EIICB component. Shows zinc-dependent metallopeptidase activity. The protein is Mlc titration factor A of Escherichia coli O17:K52:H18 (strain UMN026 / ExPEC).